The primary structure comprises 202 residues: MLILLNLSLLFYVLFDSPGSIPVFVALLKNFSRKKQQRVILRECLFALGALILFVTFGRSFFQFLDISLYAFQIIGGFLLFTVSIKMMLAPMPEKAKDDTSKTEPIFFPLAFPVITGPAVITALLSYMEEGIYSREIIFTAMIIAWAFSLFTLLCSSFFDRLSGNFGLLALERLFGIALLLMSVNLMLKGISIAFNIGFYIG.

Helical transmembrane passes span 7-27 (LSLL…FVAL), 39-59 (VILR…TFGR), 61-81 (FFQF…FLLF), 105-125 (PIFF…TALL), 137-157 (IIFT…LCSS), and 175-195 (FGIA…SIAF).

Belongs to the UPF0056 (MarC) family.

The protein localises to the cell membrane. This chain is UPF0056 membrane protein CPn_1010/CP_0843/CPj1010/CpB1048, found in Chlamydia pneumoniae (Chlamydophila pneumoniae).